The following is a 121-amino-acid chain: Griffithsin (121 aa).

The Jacalin-type lectin domain maps to 1 to 120 (SLTHRKFGGS…LDSLDIYYEQ (120 aa)).

In terms of biological role, mixed specificity lectin with anti-HIV activity. Binds to HIV envelope glycoproteins, including exterior membrane glycoprotein gp120, and inhibits viral entry into cells. Binding to gp120 is dependent on gp120 being glycosylated, and is inhibited by mannose, glucose and N-acetylglucosamine. This is Griffithsin from Griffithsia sp. (strain Q66D336) (Red alga).